Here is a 260-residue protein sequence, read N- to C-terminus: Phosphate import ATP-binding protein PstB (260 aa).

The ABC transporter domain occupies 13–255 (MRAQGVNVFY…PKQERTKDYI (243 aa)). 45 to 52 (GPSGCGKS) is an ATP binding site.

It belongs to the ABC transporter superfamily. Phosphate importer (TC 3.A.1.7) family. In terms of assembly, the complex is composed of two ATP-binding proteins (PstB), two transmembrane proteins (PstC and PstA) and a solute-binding protein (PstS).

The protein resides in the cell inner membrane. The catalysed reaction is phosphate(out) + ATP + H2O = ADP + 2 phosphate(in) + H(+). Part of the ABC transporter complex PstSACB involved in phosphate import. Responsible for energy coupling to the transport system. This chain is Phosphate import ATP-binding protein PstB, found in Sphingopyxis alaskensis (strain DSM 13593 / LMG 18877 / RB2256) (Sphingomonas alaskensis).